Here is a 945-residue protein sequence, read N- to C-terminus: Sensor kinase CckA (945 aa).

The next 2 helical transmembrane spans lie at 111-131 (ALRL…YFLF) and 139-159 (FALV…FGAA). PAS domains lie at 171–212 (HQDL…TDAD), 313–341 (LDHA…EWLG), and 432–505 (AEVR…FAGQ). Positions 574–797 (GIAHDFNNVL…TFKIFLPRLI (224 aa)) constitute a Histidine kinase domain. At His577 the chain carries Phosphohistidine; by autocatalysis. The region spanning 825–941 (TVLLVEDEDA…QLATTVKEML (117 aa)) is the Response regulatory domain. Asp876 bears the 4-aspartylphosphate mark.

Its subcellular location is the cell inner membrane. The enzyme catalyses ATP + protein L-histidine = ADP + protein N-phospho-L-histidine.. Component of a regulatory phosphorelay system that controls B.abortus cell growth, division, and intracellular survival inside mammalian host cells. This signaling pathway is composed of CckA, ChpT, CtrA and CpdR. CckA autophosphorylates in the presence of ATP on a conserved His residue and transfers a phosphoryl group to a conserved Asp residue on its C-terminal receiver domain. CckA-P transfers phosphoryl groups to the ChpT phosphotransferase. The protein is Sensor kinase CckA of Brucella abortus (strain 2308).